The chain runs to 36 residues: Photosystem I reaction center subunit VIII (36 aa).

The chain crosses the membrane as a helical span at residues 9 to 29 (ILVPLVGLVFPAITMVSLFLY).

It belongs to the PsaI family.

It is found in the plastid. Its subcellular location is the chloroplast thylakoid membrane. May help in the organization of the PsaL subunit. The polypeptide is Photosystem I reaction center subunit VIII (Zygnema circumcarinatum (Green alga)).